Reading from the N-terminus, the 120-residue chain is Spermidine export protein MdtJ (120 aa).

The next 4 helical transmembrane spans lie at 1 to 21 (MFYW…TLSM), 31 to 51 (TGFI…SFAV), 54 to 74 (IALG…ITLF), and 81 to 101 (EALS…IVLI).

Belongs to the drug/metabolite transporter (DMT) superfamily. Small multidrug resistance (SMR) (TC 2.A.7.1) family. MdtJ subfamily. Forms a complex with MdtI.

The protein resides in the cell inner membrane. In terms of biological role, catalyzes the excretion of spermidine. This chain is Spermidine export protein MdtJ, found in Enterobacter sp. (strain 638).